We begin with the raw amino-acid sequence, 332 residues long: L-lactate dehydrogenase A chain (332 aa).

NAD(+) is bound by residues 29–57 and R99; that span reads GMVG…MEDK. Substrate is bound by residues R106, N138, and R169. N138 serves as a coordination point for NAD(+). H193 (proton acceptor) is an active-site residue. T248 is a substrate binding site.

It belongs to the LDH/MDH superfamily. LDH family. As to quaternary structure, homotetramer.

It is found in the cytoplasm. It catalyses the reaction (S)-lactate + NAD(+) = pyruvate + NADH + H(+). The protein operates within fermentation; pyruvate fermentation to lactate; (S)-lactate from pyruvate: step 1/1. Interconverts simultaneously and stereospecifically pyruvate and lactate with concomitant interconversion of NADH and NAD(+). The polypeptide is L-lactate dehydrogenase A chain (ldha) (Sphyraena idiastes (Pelican barracuda)).